The following is a 453-amino-acid chain: Bifunctional protein GlmU (453 aa).

A pyrophosphorylase region spans residues 1 to 226 (MSLNVVILAA…AMEVEGANNR (226 aa)). Residues 8–11 (LAAG), lysine 22, glutamine 73, 78–79 (GT), 100–102 (YGD), glycine 137, glutamate 151, asparagine 166, and asparagine 224 contribute to the UDP-N-acetyl-alpha-D-glucosamine site. Aspartate 102 serves as a coordination point for Mg(2+). Asparagine 224 provides a ligand contact to Mg(2+). The linker stretch occupies residues 227–247 (VQLAQLERSYQKMQAERLMIA). Positions 248-453 (GATLIDPARF…QNWARPVKKK (206 aa)) are N-acetyltransferase. Residues arginine 330 and lysine 348 each coordinate UDP-N-acetyl-alpha-D-glucosamine. Histidine 360 acts as the Proton acceptor in catalysis. Positions 363 and 374 each coordinate UDP-N-acetyl-alpha-D-glucosamine. Acetyl-CoA contacts are provided by residues alanine 377, 383–384 (NY), serine 402, alanine 420, and arginine 437.

The protein in the N-terminal section; belongs to the N-acetylglucosamine-1-phosphate uridyltransferase family. It in the C-terminal section; belongs to the transferase hexapeptide repeat family. Homotrimer. It depends on Mg(2+) as a cofactor.

The protein localises to the cytoplasm. It catalyses the reaction alpha-D-glucosamine 1-phosphate + acetyl-CoA = N-acetyl-alpha-D-glucosamine 1-phosphate + CoA + H(+). The enzyme catalyses N-acetyl-alpha-D-glucosamine 1-phosphate + UTP + H(+) = UDP-N-acetyl-alpha-D-glucosamine + diphosphate. It functions in the pathway nucleotide-sugar biosynthesis; UDP-N-acetyl-alpha-D-glucosamine biosynthesis; N-acetyl-alpha-D-glucosamine 1-phosphate from alpha-D-glucosamine 6-phosphate (route II): step 2/2. Its pathway is nucleotide-sugar biosynthesis; UDP-N-acetyl-alpha-D-glucosamine biosynthesis; UDP-N-acetyl-alpha-D-glucosamine from N-acetyl-alpha-D-glucosamine 1-phosphate: step 1/1. It participates in bacterial outer membrane biogenesis; LPS lipid A biosynthesis. Functionally, catalyzes the last two sequential reactions in the de novo biosynthetic pathway for UDP-N-acetylglucosamine (UDP-GlcNAc). The C-terminal domain catalyzes the transfer of acetyl group from acetyl coenzyme A to glucosamine-1-phosphate (GlcN-1-P) to produce N-acetylglucosamine-1-phosphate (GlcNAc-1-P), which is converted into UDP-GlcNAc by the transfer of uridine 5-monophosphate (from uridine 5-triphosphate), a reaction catalyzed by the N-terminal domain. This is Bifunctional protein GlmU from Aeromonas hydrophila subsp. hydrophila (strain ATCC 7966 / DSM 30187 / BCRC 13018 / CCUG 14551 / JCM 1027 / KCTC 2358 / NCIMB 9240 / NCTC 8049).